Reading from the N-terminus, the 116-residue chain is Holo-[acyl-carrier-protein] synthase (116 aa).

2 residues coordinate Mg(2+): aspartate 5 and glutamate 50.

It belongs to the P-Pant transferase superfamily. AcpS family. Mg(2+) serves as cofactor.

Its subcellular location is the cytoplasm. It carries out the reaction apo-[ACP] + CoA = holo-[ACP] + adenosine 3',5'-bisphosphate + H(+). Functionally, transfers the 4'-phosphopantetheine moiety from coenzyme A to a Ser of acyl-carrier-protein. The chain is Holo-[acyl-carrier-protein] synthase from Campylobacter lari (strain RM2100 / D67 / ATCC BAA-1060).